A 267-amino-acid polypeptide reads, in one-letter code: Phosphate import ATP-binding protein PstB (267 aa).

The ABC transporter domain occupies 21–262 (VAARNLDFYY…PSKQQTEDYI (242 aa)). 53-60 (GPSGCGKS) provides a ligand contact to ATP.

This sequence belongs to the ABC transporter superfamily. Phosphate importer (TC 3.A.1.7) family. The complex is composed of two ATP-binding proteins (PstB), two transmembrane proteins (PstC and PstA) and a solute-binding protein (PstS).

The protein resides in the cell inner membrane. It catalyses the reaction phosphate(out) + ATP + H2O = ADP + 2 phosphate(in) + H(+). Functionally, part of the ABC transporter complex PstSACB involved in phosphate import. Responsible for energy coupling to the transport system. The polypeptide is Phosphate import ATP-binding protein PstB (Xanthomonas campestris pv. campestris (strain 8004)).